Reading from the N-terminus, the 176-residue chain is MLFFTLLIQLFLVPVLCQYACSSELKFGTACSENKTSTKWYYDSKLLFCYPYKYLGCGEGSNSFESNENCLESCKPADQFSCGGNTGPDGVCFAHGDQGCKKGTVCVMGGMVGFCCDKKIQDEWNKENSPKCLKGQVVQFKQWFGMTPLIGRSCSHNFCPEKSTCVQGKWTAYCCQ.

A signal peptide spans Met-1–Cys-17. A BPTI/Kunitz inhibitor domain is found at Cys-21–Cys-74. 3 disulfide bridges follow: Cys-21–Cys-74, Cys-31–Cys-57, and Cys-49–Cys-70. N-linked (GlcNAc...) asparagine glycosylation occurs at Asn-34.

This Caenorhabditis elegans protein is BPTI/Kunitz inhibitor domain-containing protein C02F12.5.